The following is a 505-amino-acid chain: Lysine--tRNA ligase (505 aa).

The Mg(2+) site is built by glutamate 415 and glutamate 422.

This sequence belongs to the class-II aminoacyl-tRNA synthetase family. As to quaternary structure, homodimer. Mg(2+) is required as a cofactor.

Its subcellular location is the cytoplasm. It carries out the reaction tRNA(Lys) + L-lysine + ATP = L-lysyl-tRNA(Lys) + AMP + diphosphate. This Xanthomonas campestris pv. campestris (strain 8004) protein is Lysine--tRNA ligase.